The primary structure comprises 278 residues: Replication protein A 32 kDa subunit B (278 aa).

Positions 70–143 form a DNA-binding region, OB; that stretch reads VVIVGRISRM…RSVNVFSVRP (74 aa).

This sequence belongs to the replication factor A protein 2 family. Heterotrimer of RPA1, RPA2 and RPA3 (canonical replication protein A complex). Phosphorylated in a cell-cycle-dependent manner (from the S phase until mitosis). In response to DNA damage, recruited to DNA-repair nuclear foci, as a hypophosphorylated form.

The protein resides in the nucleus. In terms of biological role, component of the replication protein A complex (RPA) required for DNA recombination, repair and replication. The activity of RPA is mediated by single-stranded DNA binding and protein interactions. Required fo cell division in meristems. Involved in the maintenance of transcriptional epigenetic gene silencing (TGS) at specific loci (including some transposons) by regulating histone H3 acetylation, 'Lys-4' and 'Lys-9' methylation. This Arabidopsis thaliana (Mouse-ear cress) protein is Replication protein A 32 kDa subunit B (RPA2B).